A 247-amino-acid chain; its full sequence is Uridylate kinase (247 aa).

Residue 17-20 (KFSG) coordinates ATP. Gly59 contributes to the UMP binding site. ATP-binding residues include Gly60 and Arg64. UMP-binding positions include Asp79 and 140 to 147 (TGNPFFTT). The ATP site is built by Thr167, Tyr173, and Asp176.

It belongs to the UMP kinase family. Homohexamer.

The protein resides in the cytoplasm. It carries out the reaction UMP + ATP = UDP + ADP. It functions in the pathway pyrimidine metabolism; CTP biosynthesis via de novo pathway; UDP from UMP (UMPK route): step 1/1. Its activity is regulated as follows. Inhibited by UTP. Catalyzes the reversible phosphorylation of UMP to UDP. This chain is Uridylate kinase, found in Legionella pneumophila subsp. pneumophila (strain Philadelphia 1 / ATCC 33152 / DSM 7513).